The chain runs to 1150 residues: Apomucin (1150 aa).

Low complexity-rich tracts occupy residues 1-36 (ETAR…TGAS) and 46-79 (SVAG…SSVG). 5 repeat units span residues 1-44 (ETAR…ETSR), 45-125 (ISVA…ETSR), 126-206 (ISVA…ETSR), 207-287 (ISVA…ETSR), and 288-368 (ISVA…ETSR). The tract at residues 1 to 368 (ETARPSVAGS…ASIGQPETSR (368 aa)) is 6 X 81 AA tandem repeats. Disordered stretches follow at residues 1-730 (ETAR…KTGI) and 776-925 (APGS…PAPL). O-linked (GalNAc...) serine; partial glycosylation is found at Ser-46, Ser-50, Ser-51, Ser-57, Ser-58, and Ser-61. Residue Thr-66 is glycosylated (O-linked (GalNAc...) threonine; partial). Ser-67 is a glycosylation site (O-linked (GalNAc...) serine; partial). O-linked (GalNAc...) threonine; partial glycosylation is found at Thr-73 and Thr-74. O-linked (GalNAc...) serine; partial glycans are attached at residues Ser-76 and Ser-77. Residues Thr-81 and Thr-83 are each glycosylated (O-linked (GalNAc...) threonine; partial). Positions 86-117 (PSVAGSGTTGTVSGASGSTGSSSGSPGATGAS) are enriched in low complexity. 2 O-linked (GalNAc...) serine; partial glycosylation sites follow: Ser-87 and Ser-91. Residues Thr-93, Thr-94, and Thr-96 are each glycosylated (O-linked (GalNAc...) threonine; partial). O-linked (GalNAc...) serine; partial glycans are attached at residues Ser-98, Ser-101, and Ser-103. Thr-104 carries an O-linked (GalNAc...) threonine; partial glycan. Ser-106, Ser-107, Ser-108, and Ser-110 each carry an O-linked (GalNAc...) serine; partial glycan. Thr-114 carries an O-linked (GalNAc...) threonine; partial glycan. O-linked (GalNAc...) serine; partial glycosylation occurs at Ser-117. Thr-123 carries an O-linked (GalNAc...) threonine; partial glycan. A glycan (O-linked (GalNAc...) serine; partial) is linked at Ser-124. Low complexity-rich tracts occupy residues 127–160 (SVAG…SSVG), 167–198 (PSVA…TGAS), 208–241 (SVAG…SSVG), 248–279 (PSVA…TGAS), 289–322 (SVAG…SSVG), 329–360 (PSVA…TGAS), and 370–396 (SVAG…ATTS). Residues 369–391 (ISVAGSSGAPAVSSGASQAAGTS) form a 6; truncated repeat. N-linked (GlcNAc...) asparagine glycosylation occurs at Asn-418. The span at 442-459 (SYNTEATTSIGRSGTTHT) shows a compositional bias: polar residues. Positions 473 to 506 (SHSSQSSKPGSSVTTPGSPESGSETGTSGEFSTT) are enriched in low complexity. Polar residues-rich tracts occupy residues 507–517 (VISGSSHTEAT) and 537–547 (ELSGTTIASGN). Asn-547 carries N-linked (GlcNAc...) asparagine glycosylation. The span at 548–558 (ATTEATTSTET) shows a compositional bias: low complexity. Over residues 564-586 (TGAQTTVPGSQVSGSETGTSEAV) the composition is skewed to polar residues. Residues 590-625 (AIASGSSSTGTTSGASDSQVTGSRTGTTGVVLGTTV) show a composition bias toward low complexity. Polar residues-rich tracts occupy residues 626–635 (APGSSSTGAT) and 643–661 (GTRS…TTYE). Residues 671 to 682 (GGSGTPGSGINT) show a composition bias toward gly residues. Polar residues-rich tracts occupy residues 688–697 (QVTGIQTGTT), 706–729 (LPGS…SKTG), and 779–788 (SFNTKATTPT). Residues 790-833 (VRAATGAGTAVGATSRSTGISTGPENSTPGTTETGSGTTSSPGG) are compositionally biased toward low complexity. Polar residues predominate over residues 875 to 908 (ETTTAPRISATGSTSVSKEITASPKVSSPETTAG). N-linked (GlcNAc...) asparagine glycans are attached at residues Asn-917, Asn-985, Asn-1002, and Asn-1068. The 67-residue stretch at 929 to 995 (PVCHGPLGEE…DTCCEIGHCE (67 aa)) folds into the VWFC domain. Disulfide bonds link Cys-1062–Cys-1109, Cys-1076–Cys-1123, Cys-1085–Cys-1139, and Cys-1089–Cys-1141. Residues 1062–1146 (CKPSPVNVTV…TACSCLDPCQ (85 aa)) form the CTCK domain.

Intermolecular disulfide bonds could help maintain a multimeric mucin structure. Extensively O-glycosylated on most but not all Ser and Thr residues of the repeat units. Highest glycosylation appears to occur on Ser residues which have Gly at positions at +2 or -2 from the glycosylation site or, where Gly is the penultimate residue. The presence of proline (usually at position +3 or -3) appears to also enhance glycosylation. As to expression, submaxillary mucosae.

The protein resides in the secreted. Apomucin is part of mucin, the major glycoprotein synthesized and secreted by mucous cells of the submaxillary gland. Its highly viscous aqueous solutions serve to lubricate the oral cavity and to protect it from the external environment. The protein is Apomucin of Sus scrofa (Pig).